Consider the following 716-residue polypeptide: tRNA(Met) cytidine acetyltransferase TmcA (716 aa).

ATP-binding positions include Q192, 217-226 (GRGKSYVIGL), and R364. Residues 401-567 (REVLARDREV…KNVALAKPLD (167 aa)) enclose the N-acetyltransferase domain. Residues 493–495 (IAV) and 500–506 (QRRGLGS) contribute to the acetyl-CoA site.

It belongs to the RNA cytidine acetyltransferase family. TmcA subfamily.

It is found in the cytoplasm. The catalysed reaction is cytidine(34) in elongator tRNA(Met) + acetyl-CoA + ATP + H2O = N(4)-acetylcytidine(34) in elongator tRNA(Met) + ADP + phosphate + CoA + H(+). Its function is as follows. Catalyzes the formation of N(4)-acetylcytidine (ac(4)C) at the wobble position of tRNA(Met), by using acetyl-CoA as an acetyl donor and ATP (or GTP). The polypeptide is tRNA(Met) cytidine acetyltransferase TmcA (Aeropyrum pernix (strain ATCC 700893 / DSM 11879 / JCM 9820 / NBRC 100138 / K1)).